Reading from the N-terminus, the 130-residue chain is Phosphoribosyl-AMP cyclohydrolase 1 (130 aa).

Position 77 (Asp77) interacts with Mg(2+). Cys78 serves as a coordination point for Zn(2+). Mg(2+) contacts are provided by Asp79 and Asp81. Cys95 and Cys102 together coordinate Zn(2+).

Belongs to the PRA-CH family. As to quaternary structure, homodimer. Mg(2+) is required as a cofactor. The cofactor is Zn(2+).

Its subcellular location is the cytoplasm. The enzyme catalyses 1-(5-phospho-beta-D-ribosyl)-5'-AMP + H2O = 1-(5-phospho-beta-D-ribosyl)-5-[(5-phospho-beta-D-ribosylamino)methylideneamino]imidazole-4-carboxamide. The protein operates within amino-acid biosynthesis; L-histidine biosynthesis; L-histidine from 5-phospho-alpha-D-ribose 1-diphosphate: step 3/9. In terms of biological role, catalyzes the hydrolysis of the adenine ring of phosphoribosyl-AMP. The chain is Phosphoribosyl-AMP cyclohydrolase 1 from Pseudomonas fluorescens (strain ATCC BAA-477 / NRRL B-23932 / Pf-5).